Consider the following 1172-residue polypeptide: Thrombospondin-2 (1172 aa).

The N-terminal stretch at 1–18 (MLWALALLALGIGPRASA) is a signal peptide. Residues 19-215 (GDHVKDTSFD…LQNVHLVFAD (197 aa)) form the Laminin G-like domain. Residues 19-232 (GDHVKDTSFD…KKGCQHSQGA (214 aa)) form a heparin-binding region. N-linked (GlcNAc...) asparagine glycans are attached at residues asparagine 151, asparagine 316, and asparagine 330. A VWFC domain is found at 318–375 (SACVQEGRIFAENETWVVDSCTTCTCKKFKTVCHQITCSPATCANPSFVEGECCPSCS). TSP type-1 domains are found at residues 381 to 431 (DEGW…GKCD), 437 to 492 (NGGW…DPCP), and 494 to 549 (DGRW…RSCP). Disulfide bonds link cysteine 393–cysteine 425, cysteine 397–cysteine 430, cysteine 408–cysteine 415, cysteine 449–cysteine 486, cysteine 453–cysteine 491, cysteine 464–cysteine 476, cysteine 506–cysteine 543, cysteine 510–cysteine 548, cysteine 521–cysteine 533, cysteine 553–cysteine 564, cysteine 558–cysteine 574, cysteine 577–cysteine 588, cysteine 594–cysteine 610, cysteine 601–cysteine 619, cysteine 622–cysteine 646, cysteine 652–cysteine 665, cysteine 659–cysteine 678, cysteine 680–cysteine 691, cysteine 707–cysteine 715, cysteine 720–cysteine 740, cysteine 756–cysteine 776, cysteine 779–cysteine 799, cysteine 815–cysteine 835, cysteine 838–cysteine 858, cysteine 876–cysteine 896, cysteine 912–cysteine 932, and cysteine 948–cysteine 1169. The N-linked (GlcNAc...) asparagine glycan is linked to asparagine 457. An EGF-like 1 domain is found at 549-589 (PIDGCLSNPCFPGAKCNSFPDGSWSCGSCPVGFLGNGTHCE). Asparagine 584 is a glycosylation site (N-linked (GlcNAc...) asparagine). One can recognise an EGF-like 2 domain in the interval 648–692 (PENPCKDKTHSCHKNAECIYLGHFSDPMYKCECQIGYAGDGLICG). TSP type-3 repeat units follow at residues 693–728 (EDSDLDGWPNNNLVCATNATYHCIKDNCPKLPNSGQ), 729–764 (EDFDKDGIGDACDEDDDNDGVSDEKDNCQLLFNPRQ), 765–787 (LDYDKDEVGDRCDNCPYVHNPAQ), 788–823 (IDTDNNGEGDACSVDIDGDDVFNERDNCPYVYNTDQ), 824–846 (RDTDGDGVGDHCDNCPLMHNPDQ), 847–884 (IDQDNDLVGDQCDNNEDIDDDGHQNNQDNCPYISNSNQ), 885–920 (ADHDNDGKGDACDSDDDNDGVPDDRDNCRLVFNPDQ), and 921–956 (EDSDGDGRGDICKDDFDNDNVPDIDDVCPENNAITE). Asparagine 710 carries an N-linked (GlcNAc...) asparagine glycan. A disordered region spans residues 727 to 752 (GQEDFDKDGIGDACDEDDDNDGVSDE). Acidic residues predominate over residues 739-749 (ACDEDDDNDGV). Residues 846-938 (QIDQDNDLVG…GDICKDDFDN (93 aa)) form a disordered region. A compositionally biased stretch (acidic residues) spans 847–866 (IDQDNDLVGDQCDNNEDIDD). The span at 870–884 (QNNQDNCPYISNSNQ) shows a compositional bias: polar residues. A compositionally biased stretch (basic and acidic residues) spans 885–895 (ADHDNDGKGDA). Over residues 896 to 905 (CDSDDDNDGV) the composition is skewed to acidic residues. The span at 925–935 (GDGRGDICKDD) shows a compositional bias: basic and acidic residues. The Cell attachment site motif lies at 928-930 (RGD). The TSP C-terminal domain occupies 960 to 1172 (RNFQMVPLDP…SDLKYECRDA (213 aa)). The N-linked (GlcNAc...) asparagine glycan is linked to asparagine 1069.

This sequence belongs to the thrombospondin family. Homotrimer; disulfide-linked. Can bind to fibrinogen, fibronectin, laminin and type V collagen. Interacts (via the TSP type I repeats) with CD36; the interaction conveys an antiangiogenic effect. Interacts (via the TSP type I repeats) with HRG; the interaction blocks the antiangiogenic effect of THBS2 with CD36. Can bind to fibrinogen, fibronectin, laminin.

Functionally, adhesive glycoprotein that mediates cell-to-cell and cell-to-matrix interactions. Ligand for CD36 mediating antiangiogenic properties. This Mus musculus (Mouse) protein is Thrombospondin-2 (Thbs2).